The chain runs to 675 residues: Methionine--tRNA ligase (675 aa).

The short motif at 15–25 (PYANGPIHLGH) is the 'HIGH' region element. Zn(2+) contacts are provided by Cys146, Cys149, Cys159, and Cys162. Residues 332–336 (KMSKS) carry the 'KMSKS' region motif. Lys335 provides a ligand contact to ATP. In terms of domain architecture, tRNA-binding spans 574 to 675 (DFAKIDLRVA…AGAKPGMRVK (102 aa)).

The protein belongs to the class-I aminoacyl-tRNA synthetase family. MetG type 1 subfamily. As to quaternary structure, homodimer. Zn(2+) is required as a cofactor.

Its subcellular location is the cytoplasm. It carries out the reaction tRNA(Met) + L-methionine + ATP = L-methionyl-tRNA(Met) + AMP + diphosphate. In terms of biological role, is required not only for elongation of protein synthesis but also for the initiation of all mRNA translation through initiator tRNA(fMet) aminoacylation. This Shewanella amazonensis (strain ATCC BAA-1098 / SB2B) protein is Methionine--tRNA ligase.